A 339-amino-acid polypeptide reads, in one-letter code: F-box protein At3g22700 (339 aa).

The F-box domain occupies 1-49 (MMSNLPLDLVEEILSRVPATSLKRLRSTCRQWNALLKDRRFTEKHFRKA).

The chain is F-box protein At3g22700 from Arabidopsis thaliana (Mouse-ear cress).